Reading from the N-terminus, the 574-residue chain is MHESQLTTSAAKPSRLGWFDDVLLLGIMAVLAGCGLIYEYLLSHYAGRILGALEAAIYTMIGLMIVSMGLGAFAARKIKDAFTGFVVLELTVALCGSLAILITAAVIGFGQQLPMLIASTLGLPPDQLPEGGMIGTLQKLSEYLPYFWGVLLGLMIGMEIPLIARVRQSLSDEHLLHNAGTIYGADYIGAGIGAAIWVGFMLAIDIQLAAALTASFNLLAGFVFIWRFWQKIQRPKLLLAAHLVVTGVLLLLAIQGPSWEQQFNNLLYKDKVVYAKATRFQQLTFTERLRGNGLSPVYALYINGRLQFSSSDEHIYHAFLVHPTLAASARHNKVLIIGGGDGLGLKQVLRWEPEQVTLLDLDAALVQLFKSPDPDMPERLSQALLSLNGNAFNDPRVTVIHDDAFNGVDKLIAKGDKYDAIIVDLPDPSHPDLNKLYSDYFYRKLKELISNDGALTVQSTSPYHAQKAFISVAKTLALAGFDVKQYHHNVPSFGEWGWSIATLDGKDAQHRLAQLTKLPIADDWLTLGLVKGAFEFPANFYQDATNIKPNELGSLQLYHYHQQAWSETQGLDLF.

The next 7 helical transmembrane spans lie at 22 to 42 (VLLL…EYLL), 55 to 75 (AAIY…AFAA), 90 to 110 (LTVA…IGFG), 144 to 164 (LPYF…PLIA), 188 to 208 (IGAG…DIQL), 209 to 229 (AAAL…WRFW), and 237 to 257 (LLLA…IQGP). A spermidine synthase region spans residues 254–510 (IQGPSWEQQF…ATLDGKDAQH (257 aa)). The PABS domain occupies 257-505 (PSWEQQFNNL…WGWSIATLDG (249 aa)). Glutamine 281 contributes to the S-methyl-5'-thioadenosine binding site. Spermidine-binding residues include histidine 317 and aspartate 341. S-methyl-5'-thioadenosine contacts are provided by residues aspartate 360 and 403 to 404 (DA). Aspartate 424 functions as the Proton acceptor in the catalytic mechanism.

The protein belongs to the spermidine/spermine synthase family. As to quaternary structure, homodimer or homotetramer.

Its subcellular location is the cell membrane. It catalyses the reaction S-adenosyl 3-(methylsulfanyl)propylamine + putrescine = S-methyl-5'-thioadenosine + spermidine + H(+). It functions in the pathway amine and polyamine biosynthesis; spermidine biosynthesis; spermidine from putrescine: step 1/1. Functionally, catalyzes the irreversible transfer of a propylamine group from the amino donor S-adenosylmethioninamine (decarboxy-AdoMet) to putrescine (1,4-diaminobutane) to yield spermidine. The chain is Polyamine aminopropyltransferase from Shewanella oneidensis (strain ATCC 700550 / JCM 31522 / CIP 106686 / LMG 19005 / NCIMB 14063 / MR-1).